Here is a 539-residue protein sequence, read N- to C-terminus: CTP synthase (539 aa).

Residues 1-272 (MTLRSKMTKY…AQIILSHFKI (272 aa)) are amidoligase domain. Ser19 lines the CTP pocket. Ser19 contacts UTP. 20 to 25 (GLGKGV) provides a ligand contact to ATP. Tyr60 is a binding site for L-glutamine. Residue Asp77 coordinates ATP. Mg(2+) contacts are provided by Asp77 and Glu147. CTP is bound by residues 154 to 156 (DIE), 193 to 198 (KSKPTQ), and Lys229. UTP-binding positions include 193 to 198 (KSKPTQ) and Lys229. The 242-residue stretch at 298–539 (KILMVGKYVE…SFLRVLIKNN (242 aa)) folds into the Glutamine amidotransferase type-1 domain. Gly360 contributes to the L-glutamine binding site. Cys387 serves as the catalytic Nucleophile; for glutamine hydrolysis. L-glutamine contacts are provided by residues 388-391 (LGFQ), Glu410, and Arg469. Catalysis depends on residues His514 and Glu516.

This sequence belongs to the CTP synthase family. As to quaternary structure, homotetramer.

The catalysed reaction is UTP + L-glutamine + ATP + H2O = CTP + L-glutamate + ADP + phosphate + 2 H(+). It carries out the reaction L-glutamine + H2O = L-glutamate + NH4(+). The enzyme catalyses UTP + NH4(+) + ATP = CTP + ADP + phosphate + 2 H(+). The protein operates within pyrimidine metabolism; CTP biosynthesis via de novo pathway; CTP from UDP: step 2/2. With respect to regulation, allosterically activated by GTP, when glutamine is the substrate; GTP has no effect on the reaction when ammonia is the substrate. The allosteric effector GTP functions by stabilizing the protein conformation that binds the tetrahedral intermediate(s) formed during glutamine hydrolysis. Inhibited by the product CTP, via allosteric rather than competitive inhibition. Functionally, catalyzes the ATP-dependent amination of UTP to CTP with either L-glutamine or ammonia as the source of nitrogen. Regulates intracellular CTP levels through interactions with the four ribonucleotide triphosphates. This Mycoplasmopsis pulmonis (strain UAB CTIP) (Mycoplasma pulmonis) protein is CTP synthase.